The sequence spans 293 residues: 1D-myo-inositol 2-acetamido-2-deoxy-alpha-D-glucopyranoside deacetylase 2 (293 aa).

His-6, Asp-9, and His-142 together coordinate Zn(2+).

Belongs to the MshB deacetylase family. Zn(2+) is required as a cofactor.

The enzyme catalyses 1D-myo-inositol 2-acetamido-2-deoxy-alpha-D-glucopyranoside + H2O = 1D-myo-inositol 2-amino-2-deoxy-alpha-D-glucopyranoside + acetate. Catalyzes the deacetylation of 1D-myo-inositol 2-acetamido-2-deoxy-alpha-D-glucopyranoside (GlcNAc-Ins) in the mycothiol biosynthesis pathway. The polypeptide is 1D-myo-inositol 2-acetamido-2-deoxy-alpha-D-glucopyranoside deacetylase 2 (Frankia alni (strain DSM 45986 / CECT 9034 / ACN14a)).